The chain runs to 468 residues: 6-phospho-beta-galactosidase (468 aa).

D-galactose 6-phosphate-binding residues include Gln19, His116, Asn159, Glu160, and Asn297. Glu160 acts as the Proton donor in catalysis. The active-site Nucleophile is Glu375. Positions 428, 429, 435, and 437 each coordinate D-galactose 6-phosphate.

It belongs to the glycosyl hydrolase 1 family.

The catalysed reaction is a 6-phospho-beta-D-galactoside + H2O = D-galactose 6-phosphate + an alcohol. Its pathway is carbohydrate metabolism; lactose degradation; D-galactose 6-phosphate and beta-D-glucose from lactose 6-phosphate: step 1/1. This chain is 6-phospho-beta-galactosidase, found in Streptococcus pyogenes serotype M28 (strain MGAS6180).